A 234-amino-acid chain; its full sequence is Adenosine 5'-phosphosulfate reductase (234 aa).

4 residues coordinate [4Fe-4S] cluster: cysteine 120, cysteine 121, cysteine 203, and cysteine 206. The active-site Nucleophile; cysteine thiosulfonate intermediate is the cysteine 229.

It belongs to the PAPS reductase family. CysH subfamily. [4Fe-4S] cluster is required as a cofactor.

The protein resides in the cytoplasm. The catalysed reaction is [thioredoxin]-disulfide + sulfite + AMP + 2 H(+) = adenosine 5'-phosphosulfate + [thioredoxin]-dithiol. The protein operates within sulfur metabolism; hydrogen sulfide biosynthesis; sulfite from sulfate. Catalyzes the formation of sulfite from adenosine 5'-phosphosulfate (APS) using thioredoxin as an electron donor. This chain is Adenosine 5'-phosphosulfate reductase, found in Bacillus cereus (strain B4264).